A 381-amino-acid polypeptide reads, in one-letter code: Pentatricopeptide repeat-containing protein 2, mitochondrial (381 aa).

One copy of the PPR repeat lies at 159–193 (TSFNILMDMLFTKGKYERALQVLIEMKNQDVRFSK). S375 carries the phosphoserine modification.

Belongs to the PTCD2 family. As to expression, high expression in heart and liver and low expression in kidney, brain and testis.

The protein localises to the mitochondrion. In terms of biological role, involved in mitochondrial RNA maturation and mitochondrial respiratory chain function. The sequence is that of Pentatricopeptide repeat-containing protein 2, mitochondrial (Ptcd2) from Mus musculus (Mouse).